Here is a 106-residue protein sequence, read N- to C-terminus: ER membrane protein complex subunit 5 (106 aa).

Residues 1-12 are Cytoplasmic-facing; it reads MESSTINAKKIS. A helical membrane pass occupies residues 13–33; that stretch reads VLLTLFSIIGYTAYSAHESIL. Residues 34 to 46 are Lumenal-facing; it reads EIRQDGKLPLDIK. A helical membrane pass occupies residues 47 to 67; it reads CEVILVTLLFTFTTVIIASPL. Residues 68-106 are Cytoplasmic-facing; the sequence is RSIQLNKWSHQRSDLAFLNSRTNFLRIKELKEKIEKVKN.

Belongs to the membrane magnesium transporter (TC 1.A.67) family. As to quaternary structure, component of the ER membrane protein complex (EMC).

The protein resides in the endoplasmic reticulum membrane. Functionally, the EMC seems to be required for efficient folding of proteins in the endoplasmic reticulum (ER). This is ER membrane protein complex subunit 5 (emc5) from Schizosaccharomyces pombe (strain 972 / ATCC 24843) (Fission yeast).